The primary structure comprises 102 residues: Small ribosomal subunit protein uS10 (102 aa).

This sequence belongs to the universal ribosomal protein uS10 family. Part of the 30S ribosomal subunit.

Its function is as follows. Involved in the binding of tRNA to the ribosomes. This Sulfurihydrogenibium sp. (strain YO3AOP1) protein is Small ribosomal subunit protein uS10.